The following is a 317-amino-acid chain: Malate dehydrogenase (317 aa).

Residues 10–15 and aspartate 34 contribute to the NAD(+) site; that span reads GGGQIG. Substrate is bound by residues arginine 83 and arginine 89. Residues asparagine 96 and 119–121 each bind NAD(+); that span reads ISN. Substrate-binding residues include asparagine 121 and arginine 152. Histidine 176 functions as the Proton acceptor in the catalytic mechanism.

The protein belongs to the LDH/MDH superfamily. MDH type 3 family.

The enzyme catalyses (S)-malate + NAD(+) = oxaloacetate + NADH + H(+). Functionally, catalyzes the reversible oxidation of malate to oxaloacetate. The chain is Malate dehydrogenase from Geobacter metallireducens (strain ATCC 53774 / DSM 7210 / GS-15).